Consider the following 793-residue polypeptide: MKRKLVTSALPYVNNFPHLGNLIQVLSADVFARFCRLKEYETLYICGTDEYGTATETKALEEKKSPEELCSFYHAIHAEIYNWFNIAFDYFGRTSTPQQTEITQGIFNDLDKNGYITEHTIEQLYCPSCKRFLADRYVLGTCPSCSYDGARGDQCEHCGKLLDPTDLKEPRCSSCGAAPEVRSTTHLYINLPKIVPEYEKWMPKTAEEGRWSNNALQMSKSWLRDGLQERAITRDLKWGIPVPKKGFEDKVFYVWFDAPIGYISITKCWADLAGKDWKAWWLDQNDVELFQFIGKDNIPFHTVIFPCSLIGSGKNWTKLFHMSGTEYLNYENGKFSKSKGVGVFGNDAKESGIPADMWRFYIFYNRPEKNDTQFTWKDFQERVNSELIGNLCNLVNRTATFIHRYYDGKIPQVDGAKSGREDIKSMVKSLREAASASFKKITELSDWAELRDSFHEAFALSSVANKAFQDGEPWKRRETDPEYAEALMSELCYLIKDILILIHPYMPQYADQAAGFFGQKIWSGNIFDGKAPQFNKPEGSFLSWKNLGEREGLKTVENPVIIFKTLDNKVIDAYRERYSGSQKDRKKSEKGCSACKDSGSSKSDAAASSAKPEVKLSPAELFSKKIALKTAKIISVERHPDADKLYIEKLDDGSGEERTILSGLVPFLKEDEILGKTVIIADNLKPRKMRGIESKGMLLAASWYDEEEKEHVELLQAPWAAPGTPVILEGDADISDPEAVKAFYAQKPAAIDADTFFAAPILIEDYIPKIEGKKLLVAGKEMKLEKVKTGEAG.

A 'HIGH' region motif is present at residues 11–21 (PYVNNFPHLGN). Zn(2+)-binding residues include C142, C145, C155, and C158. The 'KMSKS' region signature appears at 334–338 (KFSKS). Residue K337 coordinates ATP. Over residues 581–590 (SQKDRKKSEK) the composition is skewed to basic and acidic residues. The segment at 581–610 (SQKDRKKSEKGCSACKDSGSSKSDAAASSA) is disordered. Low complexity predominate over residues 591 to 610 (GCSACKDSGSSKSDAAASSA). In terms of domain architecture, tRNA-binding spans 622 to 727 (FSKKIALKTA…PWAAPGTPVI (106 aa)).

The protein belongs to the class-I aminoacyl-tRNA synthetase family. MetG type 1 subfamily. In terms of assembly, homodimer. It depends on Zn(2+) as a cofactor.

The protein resides in the cytoplasm. It catalyses the reaction tRNA(Met) + L-methionine + ATP = L-methionyl-tRNA(Met) + AMP + diphosphate. Its function is as follows. Is required not only for elongation of protein synthesis but also for the initiation of all mRNA translation through initiator tRNA(fMet) aminoacylation. This chain is Methionine--tRNA ligase, found in Treponema denticola (strain ATCC 35405 / DSM 14222 / CIP 103919 / JCM 8153 / KCTC 15104).